A 635-amino-acid polypeptide reads, in one-letter code: Threonine--tRNA ligase (635 aa).

Residues 1–61 form the TGS domain; that stretch reads MPVIRLPDGS…TDDADLSIIT (61 aa). Residues 242 to 533 form a catalytic region; sequence DHRKLGRQLD…LIENYAGAMP (292 aa). Residues Cys-333, His-384, and His-510 each coordinate Zn(2+).

Belongs to the class-II aminoacyl-tRNA synthetase family. As to quaternary structure, homodimer. Requires Zn(2+) as cofactor.

Its subcellular location is the cytoplasm. The catalysed reaction is tRNA(Thr) + L-threonine + ATP = L-threonyl-tRNA(Thr) + AMP + diphosphate + H(+). In terms of biological role, catalyzes the attachment of threonine to tRNA(Thr) in a two-step reaction: L-threonine is first activated by ATP to form Thr-AMP and then transferred to the acceptor end of tRNA(Thr). Also edits incorrectly charged L-seryl-tRNA(Thr). The protein is Threonine--tRNA ligase of Methylobacillus flagellatus (strain ATCC 51484 / DSM 6875 / VKM B-1610 / KT).